We begin with the raw amino-acid sequence, 206 residues long: MLTMGWSNILSLFGAMLILAALPSLSVLTVSSKSASGGFIHGLFAALGVVLGDIIFILIALWGLAFLRGAMGDFFVILKYISGIYLSWLGINTIRAKVNNQSLAKVDVKSLSSSFSAGLLITLADQKAVLFYLGFLPTFVDVNNIAYLDIAVIILTAILTVGGVKIFYAFLAHRSGLLISRQNKRIMNYLAGALMISVGVFLLISS.

The next 4 helical transmembrane spans lie at 9-29 (ILSLFGAMLILAALPSLSVLT), 47-67 (LGVVLGDIIFILIALWGLAFL), 74-94 (FFVILKYISGIYLSWLGINTI), and 150-170 (IAVIILTAILTVGGVKIFYAF).

The protein belongs to the Rht family.

It localises to the cell membrane. This is an uncharacterized protein from Synechocystis sp. (strain ATCC 27184 / PCC 6803 / Kazusa).